The chain runs to 75 residues: Exodeoxyribonuclease 7 small subunit (75 aa).

Belongs to the XseB family. As to quaternary structure, heterooligomer composed of large and small subunits.

It localises to the cytoplasm. It carries out the reaction Exonucleolytic cleavage in either 5'- to 3'- or 3'- to 5'-direction to yield nucleoside 5'-phosphates.. Bidirectionally degrades single-stranded DNA into large acid-insoluble oligonucleotides, which are then degraded further into small acid-soluble oligonucleotides. This is Exodeoxyribonuclease 7 small subunit from Listeria welshimeri serovar 6b (strain ATCC 35897 / DSM 20650 / CCUG 15529 / CIP 8149 / NCTC 11857 / SLCC 5334 / V8).